The chain runs to 882 residues: Alanine--tRNA ligase (882 aa).

Residues His-571, His-575, Cys-673, and His-677 each coordinate Zn(2+).

Belongs to the class-II aminoacyl-tRNA synthetase family. Zn(2+) is required as a cofactor.

Its subcellular location is the cytoplasm. The catalysed reaction is tRNA(Ala) + L-alanine + ATP = L-alanyl-tRNA(Ala) + AMP + diphosphate. Functionally, catalyzes the attachment of alanine to tRNA(Ala) in a two-step reaction: alanine is first activated by ATP to form Ala-AMP and then transferred to the acceptor end of tRNA(Ala). Also edits incorrectly charged Ser-tRNA(Ala) and Gly-tRNA(Ala) via its editing domain. This chain is Alanine--tRNA ligase, found in Stenotrophomonas maltophilia (strain K279a).